The chain runs to 485 residues: tRNA sulfurtransferase (485 aa).

The region spanning 61 to 165 (EELIALLQRI…DDKMMLVKAR (105 aa)) is the THUMP domain. Residues 183–184 (LI), K265, G287, and Q296 contribute to the ATP site. C344 and C456 are joined by a disulfide. Residues 404-483 (LGENEVILDI…FSNVRVFAKN (80 aa)) form the Rhodanese domain. Residue C456 is the Cysteine persulfide intermediate of the active site.

It belongs to the ThiI family.

The protein resides in the cytoplasm. It carries out the reaction [ThiI sulfur-carrier protein]-S-sulfanyl-L-cysteine + a uridine in tRNA + 2 reduced [2Fe-2S]-[ferredoxin] + ATP + H(+) = [ThiI sulfur-carrier protein]-L-cysteine + a 4-thiouridine in tRNA + 2 oxidized [2Fe-2S]-[ferredoxin] + AMP + diphosphate. The enzyme catalyses [ThiS sulfur-carrier protein]-C-terminal Gly-Gly-AMP + S-sulfanyl-L-cysteinyl-[cysteine desulfurase] + AH2 = [ThiS sulfur-carrier protein]-C-terminal-Gly-aminoethanethioate + L-cysteinyl-[cysteine desulfurase] + A + AMP + 2 H(+). It participates in cofactor biosynthesis; thiamine diphosphate biosynthesis. Its function is as follows. Catalyzes the ATP-dependent transfer of a sulfur to tRNA to produce 4-thiouridine in position 8 of tRNAs, which functions as a near-UV photosensor. Also catalyzes the transfer of sulfur to the sulfur carrier protein ThiS, forming ThiS-thiocarboxylate. This is a step in the synthesis of thiazole, in the thiamine biosynthesis pathway. The sulfur is donated as persulfide by IscS. This is tRNA sulfurtransferase from Haemophilus influenzae (strain PittGG).